Reading from the N-terminus, the 120-residue chain is Large ribosomal subunit protein bL19 (120 aa).

Belongs to the bacterial ribosomal protein bL19 family.

Its function is as follows. This protein is located at the 30S-50S ribosomal subunit interface and may play a role in the structure and function of the aminoacyl-tRNA binding site. The polypeptide is Large ribosomal subunit protein bL19 (Crocosphaera subtropica (strain ATCC 51142 / BH68) (Cyanothece sp. (strain ATCC 51142))).